The chain runs to 212 residues: Phosphoribosylglycinamide formyltransferase (212 aa).

Residue G11–N13 participates in N(1)-(5-phospho-beta-D-ribosyl)glycinamide binding. (6R)-10-formyltetrahydrofolate contacts are provided by residues R64, M89–L92, and N106. H108 acts as the Proton donor in catalysis. Residue T140 to D144 participates in (6R)-10-formyltetrahydrofolate binding. Q170–E173 provides a ligand contact to N(1)-(5-phospho-beta-D-ribosyl)glycinamide.

This sequence belongs to the GART family. In terms of assembly, monomer. Homodimer below pH 6.8.

The enzyme catalyses N(1)-(5-phospho-beta-D-ribosyl)glycinamide + (6R)-10-formyltetrahydrofolate = N(2)-formyl-N(1)-(5-phospho-beta-D-ribosyl)glycinamide + (6S)-5,6,7,8-tetrahydrofolate + H(+). Its pathway is purine metabolism; IMP biosynthesis via de novo pathway; N(2)-formyl-N(1)-(5-phospho-D-ribosyl)glycinamide from N(1)-(5-phospho-D-ribosyl)glycinamide (10-formyl THF route): step 1/1. Inhibited by N10-(bromoacetyl)-5,8-dideazafolate. In terms of biological role, catalyzes the transfer of a formyl group from 10-formyltetrahydrofolate to 5-phospho-ribosyl-glycinamide (GAR), producing 5-phospho-ribosyl-N-formylglycinamide (FGAR) and tetrahydrofolate. The polypeptide is Phosphoribosylglycinamide formyltransferase (Escherichia coli (strain K12)).